A 417-amino-acid chain; its full sequence is Sulfate adenylyltransferase (417 aa).

Polar residues predominate over residues 1 to 10 (MTSITANQKP). A disordered region spans residues 1 to 20 (MTSITANQKPSKLVPPHGSP).

Belongs to the sulfate adenylyltransferase family.

It catalyses the reaction sulfate + ATP + H(+) = adenosine 5'-phosphosulfate + diphosphate. The protein operates within sulfur metabolism; hydrogen sulfide biosynthesis; sulfite from sulfate: step 1/3. This is Sulfate adenylyltransferase from Psychrobacter arcticus (strain DSM 17307 / VKM B-2377 / 273-4).